Here is a 374-residue protein sequence, read N- to C-terminus: Pectate lyase 3 (374 aa).

The signal sequence occupies residues 1–22 (MKYLLPSAAAGLLLLAAQPTMA). Cys-93 and Cys-176 are disulfide-bonded. Residues Asp-150, Asp-152, Glu-187, and Asp-191 each contribute to the Ca(2+) site. Arg-239 is an active-site residue. Residues Cys-350 and Cys-373 are joined by a disulfide bond.

The protein belongs to the polysaccharide lyase 1 family. PLADES subfamily. Ca(2+) is required as a cofactor.

Its subcellular location is the secreted. The catalysed reaction is Eliminative cleavage of (1-&gt;4)-alpha-D-galacturonan to give oligosaccharides with 4-deoxy-alpha-D-galact-4-enuronosyl groups at their non-reducing ends.. The protein operates within glycan metabolism; pectin degradation; 2-dehydro-3-deoxy-D-gluconate from pectin: step 2/5. In terms of biological role, involved in maceration and soft-rotting of plant tissue. This is Pectate lyase 3 (pel3) from Pectobacterium carotovorum (Erwinia carotovora).